We begin with the raw amino-acid sequence, 226 residues long: Thymocyte nuclear protein 1 (226 aa).

Positions 1-38 (MPRPRKRQTGTAGPDRKKLSGKRTKTENSESTSVKLEN) are disordered. Residues 5–10 (RKRQTG) carry the Nuclear localization signal motif. Basic and acidic residues predominate over residues 14 to 28 (PDRKKLSGKRTKTEN). The segment covering 29–38 (SESTSVKLEN) has biased composition (polar residues).

In terms of processing, phosphorylated. Expressed in the medulla containing mature thymocytes, but not the cortex having immature thymocytes (at protein level). Abundant expression seen in testis, liver, brain and kidney with lower levels of the expression in thymus, spleen, heart and stomach.

The protein localises to the nucleus. Its function is as follows. Specifically binds 5-hydroxymethylcytosine (5hmC), suggesting that it acts as a specific reader of 5hmC. This Mus musculus (Mouse) protein is Thymocyte nuclear protein 1 (Thyn1).